We begin with the raw amino-acid sequence, 649 residues long: Stress-70 protein, mitochondrial (649 aa).

Residues 1–46 (MISASRAAAARLVGAAASRGPTAARHKDGWNGLSHEAFRIVSRRDY) constitute a mitochondrion transit peptide. The tract at residues 1–432 (MISASRAAAA…IQGGVLAGDV (432 aa)) is interaction with NFS1. Positions 63 and 64 each coordinate ADP. A nucleotide-binding domain (NBD) region spans residues 63-431 (TNSCVAVMEG…AIQGGVLAGD (369 aa)). Lysine 76 carries the N6-acetyllysine modification. Threonine 87 bears the Phosphothreonine mark. Lysine 135 and lysine 138 each carry N6-acetyllysine; alternate. An N6-succinyllysine; alternate mark is found at lysine 135 and lysine 138. At lysine 143 the chain carries N6-acetyllysine. Residue lysine 206 is modified to N6-acetyllysine; alternate. Lysine 206 carries the N6-succinyllysine; alternate modification. Lysine 206 is subject to N6-malonyllysine; alternate. N6-acetyllysine occurs at positions 234 and 288. At lysine 300 the chain carries N6-acetyllysine; alternate. An N6-succinyllysine; alternate modification is found at lysine 300. Glutamate 313, lysine 316, and serine 320 together coordinate ADP. Lysine 368 bears the N6-succinyllysine mark. ADP-binding residues include glycine 388 and arginine 391. The residue at position 394 (lysine 394) is an N6-succinyllysine. Serine 408 bears the Phosphoserine mark. The interval 432-441 (VTDVLLLDVT) is interdomain linker. An N6-acetyllysine; alternate mark is found at lysine 565, lysine 598, and lysine 638. Lysine 565, lysine 598, and lysine 638 each carry N6-succinyllysine; alternate.

The protein belongs to the heat shock protein 70 family. As to quaternary structure, interacts strongly with the intermediate form of FXN and weakly with its mature form. Interacts with HSCB. Associates with the mitochondrial contact site and cristae organizing system (MICOS) complex, composed of at least MICOS10/MIC10, CHCHD3/MIC19, CHCHD6/MIC25, APOOL/MIC27, IMMT/MIC60, APOO/MIC23/MIC26 and QIL1/MIC13. This complex was also known under the names MINOS or MitOS complex. The MICOS complex associates with mitochondrial outer membrane proteins SAMM50, MTX1, MTX2 and DNAJC11, mitochondrial inner membrane protein TMEM11 and with HSPA9. Interacts with DNLZ, the interaction is required to prevent self-aggregation. Interacts with TESPA1. Interacts with PDPN. Interacts with NFU1, NFS1 and ISCU. Interacts with TP53; the interaction promotes TP53 degradation. Interacts (via SBD domain) with UBXN2A; the interaction with UBXN2A inhibits HSPA9/MOT-2 interaction with and degradation of TP53, thereby promotes TP53 translocation to the nucleus. Interacts with ITPR1 AND VDAC1; this interaction couples ITPR1 to VDAC1. Component of the TIM23 mitochondrial inner membrane pre-sequence translocase complex.

The protein localises to the mitochondrion. It localises to the nucleus. It is found in the nucleolus. The protein resides in the cytoplasm. Its subcellular location is the mitochondrion matrix. The catalysed reaction is ATP + H2O = ADP + phosphate + H(+). With respect to regulation, the chaperone activity is regulated by ATP-induced allosteric coupling of the nucleotide-binding (NBD) and substrate-binding (SBD) domains. ATP binding in the NBD leads to a conformational change in the NBD, which is transferred through the interdomain linker (IDL) to the substrate-binding domain (SBD). This elicits a reduced substrate affinity and a faster substrate exchange rate. Upon hydrolysis of ATP to ADP, the protein undergoes a conformational change that increases its affinity for substrate proteins. It cycles through repeated phases of ATP hydrolysis and nucleotide exchange, facilitating repeated cycles of substrate binding and release. Functions in collaboration with co-chaperones. Functions with the co-chaperone, DNLZ, to maintain solubility and regulate ATP hydrolysis. Nucleotide exchange factors, GRPEL1 and GRPEL2, accelerate nucleotide exchange. Mitochondrial chaperone that plays a key role in mitochondrial protein import, folding, and assembly. Plays an essential role in the protein quality control system, the correct folding of proteins, the re-folding of misfolded proteins, and the targeting of proteins for subsequent degradation. These processes are achieved through cycles of ATP binding, ATP hydrolysis, and ADP release, mediated by co-chaperones. In mitochondria, it associates with the TIM (translocase of the inner membrane) protein complex to assist in the import and folding of mitochondrial proteins. Plays an important role in mitochondrial iron-sulfur cluster (ISC) biogenesis, interacts with and stabilizes ISC cluster assembly proteins FXN, NFU1, NFS1 and ISCU. Regulates erythropoiesis via stabilization of ISC assembly. Regulates mitochondrial calcium-dependent apoptosis by coupling two calcium channels, ITPR1 and VDAC1, at the mitochondria-associated endoplasmic reticulum (ER) membrane to facilitate calcium transport from the ER lumen to the mitochondria intermembrane space, providing calcium for the downstream calcium channel MCU, which releases it into the mitochondrial matrix. Although primarily located in the mitochondria, it is also found in other cellular compartments. In the cytosol, it associates with proteins involved in signaling, apoptosis, or senescence. It may play a role in cell cycle regulation via its interaction with and promotion of degradation of TP53. May play a role in the control of cell proliferation and cellular aging. Protects against reactive oxygen species (ROS). Extracellular HSPA9 plays a cytoprotective role by preventing cell lysis following immune attack by the membrane attack complex by disrupting formation of the complex. The protein is Stress-70 protein, mitochondrial of Canis lupus familiaris (Dog).